The following is a 351-amino-acid chain: Sesquiterpene synthase 14 (351 aa).

Mg(2+) is bound by residues aspartate 87, asparagine 223, serine 227, and glutamate 231. Residues 87–91 (DEYTD) carry the DDXXD motif motif. An NSE/DTE motif motif is present at residues 223 to 231 (NDIASYNKE). The (2E,6E)-farnesyl diphosphate site is built by arginine 312 and tyrosine 313.

Belongs to the terpene synthase family. It depends on Mg(2+) as a cofactor.

The catalysed reaction is (2E,6E)-farnesyl diphosphate = pentalenene + diphosphate. Functionally, terpene cyclase that catalyzes the cyclization of farnesyl diphosphate (FPP) to pentalenene as a major product, as well as caryophyllene. This chain is Sesquiterpene synthase 14, found in Postia placenta (strain ATCC 44394 / Madison 698-R) (Brown rot fungus).